Consider the following 739-residue polypeptide: MTEQELLSAQTADNAGTDSTERVDAGGMQVAKVLYDFVTEAVLPRVGVDAEKFWSGFAAIARDLTPRNRELLARRDELQMLIDDYHRNNSGTIDQEAYEDFLKEIGYLVEEPEAAEIRTQNVDTEISSTAGPQLVVPILNARFALNAANARWGSLYDALYGTNAIPETDGAEKGKEYNPVRGQKVIEWGREFLDSVVPLDGASHADVEKYNITDGKLAAHIGDSVYRLKNRESYRGFTGNFLDPEAILLETNGLHIELQIDPVHPIGKADKTGLKDIVLESAITTIMDFEDSVAAVDAEDKTLGYSNWFGLNTGELKEEMSKNGRIFTRELNKDRVYIGRNGTELVLHGRSLLFVRNVGHLMQNPSILIDGEEIFEGIMDAVLTTVCAIPGIAPQNKMRNSRKGSIYIVKPKQHGPEEVAFTNELFGRVEDLLDLPRHTLKVGVMDEERRTSVNLDASIMEVADRLAFINTGFLDRTGDEIHTSMEAGAMVRKADMQTAPWKQAYENNNVDAGIQRGLPGKAQIGKGMWAMTELMAEMLEKKIGQPREGANTAWVPSPTGATLHATHYHLVDVFKVQDELRAAGRRDSLRNILTIPTAPNTNWSEEEKKEEMDNNCQSILGYVVRWVEHGVGCSKVPDIHDIDLMEDRATLRISSQMLANWIRHDVVSKEQVLESLERMAVVVDKQNAGDEAYRDMAPNYDASLAFQAAKDLIFEGTKSPSGYTEPILHARRREFKAKN.

Over residues M1–D18 the composition is skewed to polar residues. Residues M1–V23 are disordered. Acetyl-CoA contacts are provided by residues V135, R142–F143, S292, and R329. The active-site Proton acceptor is R356. Residues R356, E447, and G472–D475 contribute to the glyoxylate site. E447 and D475 together coordinate Mg(2+). P556 contributes to the acetyl-CoA binding site. C633 is modified (cysteine sulfenic acid (-SOH)). The active-site Proton donor is the D647.

It belongs to the malate synthase family. GlcB subfamily. Monomer. Mg(2+) serves as cofactor.

It localises to the cytoplasm. The enzyme catalyses glyoxylate + acetyl-CoA + H2O = (S)-malate + CoA + H(+). Its pathway is carbohydrate metabolism; glyoxylate cycle; (S)-malate from isocitrate: step 2/2. Inhibited by oxalate, glycolate and ATP. In terms of biological role, involved in the glycolate utilization. Catalyzes the condensation and subsequent hydrolysis of acetyl-coenzyme A (acetyl-CoA) and glyoxylate to form malate and CoA. The protein is Malate synthase G of Corynebacterium glutamicum (strain ATCC 13032 / DSM 20300 / JCM 1318 / BCRC 11384 / CCUG 27702 / LMG 3730 / NBRC 12168 / NCIMB 10025 / NRRL B-2784 / 534).